The following is a 307-amino-acid chain: Undecaprenyl-diphosphatase (307 aa).

Transmembrane regions (helical) follow at residues Ala40–Phe60, Leu79–Phe99, Leu107–Val127, Ala183–Phe203, Ile219–Val239, and Leu249–Ala269.

The protein belongs to the UppP family.

The protein localises to the cell inner membrane. It carries out the reaction di-trans,octa-cis-undecaprenyl diphosphate + H2O = di-trans,octa-cis-undecaprenyl phosphate + phosphate + H(+). Its function is as follows. Catalyzes the dephosphorylation of undecaprenyl diphosphate (UPP). Confers resistance to bacitracin. This Sorangium cellulosum (strain So ce56) (Polyangium cellulosum (strain So ce56)) protein is Undecaprenyl-diphosphatase.